The sequence spans 298 residues: uncharacterized protein (298 aa).

The disordered stretch occupies residues 264–298; sequence APPPPLPCITTGPAALEDSPKASKANKGKKAKAKK. Residues 287–298 show a composition bias toward basic residues; it reads KANKGKKAKAKK.

This is an uncharacterized protein from Mus musculus (Mouse).